Here is a 541-residue protein sequence, read N- to C-terminus: GMP synthase [glutamine-hydrolyzing] (541 aa).

In terms of domain architecture, Glutamine amidotransferase type-1 spans 15-209 (TILTLDFGSQ…AVNICGCKQN (195 aa)). C91 functions as the Nucleophile in the catalytic mechanism. Active-site residues include H183 and E185. The 207-residue stretch at 210–416 (WTMARFVDQE…LGIAHEMVMR (207 aa)) folds into the GMPS ATP-PPase domain. Residue 238–244 (SGGVDST) participates in ATP binding. 4 residues coordinate XMP: R311, D478, K533, and E539.

Homodimer. Mg(2+) serves as cofactor.

The protein resides in the cytoplasm. It localises to the cytosol. The catalysed reaction is XMP + L-glutamine + ATP + H2O = GMP + L-glutamate + AMP + diphosphate + 2 H(+). It participates in purine metabolism; GMP biosynthesis; GMP from XMP (L-Gln route): step 1/1. Functionally, catalyzes the conversion of xanthine monophosphate (XMP) to GMP in the presence of glutamine and ATP through an adenyl-XMP intermediate. The protein is GMP synthase [glutamine-hydrolyzing] (gua1) of Aspergillus oryzae (strain ATCC 42149 / RIB 40) (Yellow koji mold).